The sequence spans 862 residues: Protein SEY1 (862 aa).

At 1–747 the chain is on the cytoplasmic side; sequence MVSNGHFASA…KRSAIGGMTQ (747 aa). The GB1/RHD3-type G domain occupies 49-306; sequence GFNYHLISVF…IPADGFAVYA (258 aa). Residue 59-66 participates in GTP binding; it reads GSQSTGKS. Residues 481-507 adopt a coiled-coil conformation; that stretch reads SNYTQELALYQKDLEKISAQLRKDEMR. The helical transmembrane segment at 748–768 threads the bilayer; it reads IPVYFYILLLALGWNEIVAVL. The Lumenal portion of the chain corresponds to 769 to 771; sequence RNP. A helical transmembrane segment spans residues 772–792; the sequence is LYFFMLFLCAVGAFVTYQLNL. The Cytoplasmic segment spans residues 793 to 862; it reads WGPMIKMAEA…DDDDEDEGSW (70 aa). Positions 819 to 862 are disordered; sequence LEPSEAGPHAARYKNSTEEYEMSNVKAPQRTNSGDDDDEDEGSW. A compositionally biased stretch (acidic residues) spans 852–862; the sequence is GDDDDEDEGSW.

The protein belongs to the TRAFAC class dynamin-like GTPase superfamily. GB1/RHD3 GTPase family. RHD3 subfamily.

The protein resides in the endoplasmic reticulum membrane. In terms of biological role, cooperates with the reticulon proteins and tubule-shaping DP1 family proteins to generate and maintain the structure of the tubular endoplasmic reticulum network. Has GTPase activity, which is required for its function in ER organization. This is Protein SEY1 from Uncinocarpus reesii (strain UAMH 1704).